The primary structure comprises 38 residues: Photosystem II reaction center protein L (38 aa).

The helical transmembrane segment at 17–37 (SLFWGLLLIFVLAVLFSSYFF) threads the bilayer.

This sequence belongs to the PsbL family. PSII is composed of 1 copy each of membrane proteins PsbA, PsbB, PsbC, PsbD, PsbE, PsbF, PsbH, PsbI, PsbJ, PsbK, PsbL, PsbM, PsbT, PsbX, PsbY, PsbZ, Psb30/Ycf12, at least 3 peripheral proteins of the oxygen-evolving complex and a large number of cofactors. It forms dimeric complexes.

The protein resides in the plastid. It is found in the chloroplast thylakoid membrane. Its function is as follows. One of the components of the core complex of photosystem II (PSII). PSII is a light-driven water:plastoquinone oxidoreductase that uses light energy to abstract electrons from H(2)O, generating O(2) and a proton gradient subsequently used for ATP formation. It consists of a core antenna complex that captures photons, and an electron transfer chain that converts photonic excitation into a charge separation. This subunit is found at the monomer-monomer interface and is required for correct PSII assembly and/or dimerization. The protein is Photosystem II reaction center protein L of Gracilaria tenuistipitata var. liui (Red alga).